A 343-amino-acid chain; its full sequence is UDP-3-O-acylglucosamine N-acyltransferase (343 aa).

H238 functions as the Proton acceptor in the catalytic mechanism.

The protein belongs to the transferase hexapeptide repeat family. LpxD subfamily. As to quaternary structure, homotrimer.

It catalyses the reaction a UDP-3-O-[(3R)-3-hydroxyacyl]-alpha-D-glucosamine + a (3R)-hydroxyacyl-[ACP] = a UDP-2-N,3-O-bis[(3R)-3-hydroxyacyl]-alpha-D-glucosamine + holo-[ACP] + H(+). Its pathway is bacterial outer membrane biogenesis; LPS lipid A biosynthesis. Its function is as follows. Catalyzes the N-acylation of UDP-3-O-acylglucosamine using 3-hydroxyacyl-ACP as the acyl donor. Is involved in the biosynthesis of lipid A, a phosphorylated glycolipid that anchors the lipopolysaccharide to the outer membrane of the cell. The protein is UDP-3-O-acylglucosamine N-acyltransferase of Marinomonas sp. (strain MWYL1).